A 783-amino-acid chain; its full sequence is Type 4 coupling protein DotL (783 aa).

The chain crosses the membrane as a helical span at residues 47–67; that stretch reads VSYYFSEAATFLLIMGGIFFL. The segment at 100-500 is ATPase domain; it reads NIARGITFFG…ICMKLEDPTE (401 aa). The segment at 671-773 is interaction with IcmS/IcmW; that stretch reads VEGALTIFSK…SAKISAEREK (103 aa).

In terms of assembly, the T4BSS is a complex nanomachine composed of several subcomplexes. This subunit is part of the Type IV Coupling Complex (T4CC), a subcomplex composed of the DotLMNYZ core and the IcmSW-LvgA adapter subunits, linked by the C-terminal tail of DotL. Six DotLMNYZ hetero-pentameric units may assemble into a hexameric nanomachine, forming an inner membrane channel for effectors to pass through. Interacts directly with DotM. Interacts directly, via its C-terminal region, with the type IV adapter proteins IcmS and IcmW. Also interacts with DotN and LvgA via its C-terminal region.

It localises to the cell inner membrane. In terms of biological role, component of the Dot/Icm type IVB secretion system (T4BSS), which is used to inject bacterial effector proteins into eukaryotic host cells. Part of a subcomplex which recruits effector proteins and delivers them to the core transmembrane subcomplex. Plays a central role in the assembly of the subcomplex. Required for the recruitment of IcmS and IcmW to the inner membrane and for the translocation of adapter-dependent substrates. May have ATPase activity. The sequence is that of Type 4 coupling protein DotL from Legionella pneumophila subsp. pneumophila (strain Philadelphia 1 / ATCC 33152 / DSM 7513).